Consider the following 306-residue polypeptide: Triplex capsid protein 2 (306 aa).

This sequence belongs to the herpesviridae TRX2 protein family. As to quaternary structure, interacts with TRX1 and major capisd protein/MCP.

It localises to the virion. The protein localises to the host nucleus. In terms of biological role, structural component of the T=16 icosahedral capsid. The capsid is composed of pentamers and hexamers of major capsid protein/MCP, which are linked together by heterotrimers called triplexes. These triplexes are formed by a single molecule of triplex protein 1/TRX1 and two copies of triplex protein 2/TRX2. Additionally, TRX1 is required for efficient transport of TRX2 to the nucleus, which is the site of capsid assembly. The protein is Triplex capsid protein 2 of Human cytomegalovirus (strain AD169) (HHV-5).